The following is a 315-amino-acid chain: Beta-ketoacyl-[acyl-carrier-protein] synthase III 2 (315 aa).

Catalysis depends on residues Cys-113 and His-241. The ACP-binding stretch occupies residues 242 to 246 (QANLR). Residue Asn-271 is part of the active site.

Belongs to the thiolase-like superfamily. FabH family. Homodimer.

The protein localises to the cytoplasm. The catalysed reaction is malonyl-[ACP] + acetyl-CoA + H(+) = 3-oxobutanoyl-[ACP] + CO2 + CoA. The protein operates within lipid metabolism; fatty acid biosynthesis. In terms of biological role, catalyzes the condensation reaction of fatty acid synthesis by the addition to an acyl acceptor of two carbons from malonyl-ACP. Catalyzes the first condensation reaction which initiates fatty acid synthesis and may therefore play a role in governing the total rate of fatty acid production. Possesses both acetoacetyl-ACP synthase and acetyl transacylase activities. Its substrate specificity determines the biosynthesis of branched-chain and/or straight-chain of fatty acids. The protein is Beta-ketoacyl-[acyl-carrier-protein] synthase III 2 of Streptomyces avermitilis (strain ATCC 31267 / DSM 46492 / JCM 5070 / NBRC 14893 / NCIMB 12804 / NRRL 8165 / MA-4680).